A 130-amino-acid chain; its full sequence is Histone H2A.1 (130 aa).

Residues 1–22 (MSGGKGKAGSSEKASTSRSAKA) form a disordered region. S2 carries the post-translational modification N-acetylserine. N6-acetyllysine occurs at positions 5 and 7. Q105 bears the N5-methylglutamine mark. Residue S127 is modified to Phosphoserine. Positions 127–128 (SQ) match the [ST]-Q motif motif.

This sequence belongs to the histone H2A family. The nucleosome is a histone octamer containing two molecules each of H2A, H2B, H3 and H4 assembled in one H3-H4 heterotetramer and two H2A-H2B heterodimers. The octamer wraps approximately 147 bp of DNA. In terms of processing, phosphorylated to form H2AS128ph (gamma-H2A) in response to DNA double-strand breaks (DSBs) generated by exogenous genotoxic agents and by stalled replication forks. Phosphorylation is dependent on the DNA damage checkpoint kinases MEC1/ATR and TEL1/ATM, spreads on either side of a detected DSB site and may mark the surrounding chromatin for recruitment of proteins required for DNA damage signaling and repair. Gamma-H2A is removed from the DNA prior to the strand invasion-primer extension step of the repair process and subsequently dephosphorylated. Dephosphorylation is necessary for efficient recovery from the DNA damage checkpoint. Acetylated by ESA1 to form H2AK4ac and H2AK7ac.

It localises to the nucleus. The protein resides in the chromosome. Functionally, core component of nucleosome which plays a central role in DNA double strand break (DSB) repair. Nucleosomes wrap and compact DNA into chromatin, limiting DNA accessibility to the cellular machineries which require DNA as a template. Histones thereby play a central role in transcription regulation, DNA repair, DNA replication and chromosomal stability. DNA accessibility is regulated via a complex set of post-translational modifications of histones, also called histone code, and nucleosome remodeling. This Lodderomyces elongisporus (strain ATCC 11503 / CBS 2605 / JCM 1781 / NBRC 1676 / NRRL YB-4239) (Yeast) protein is Histone H2A.1 (HTA1).